Consider the following 338-residue polypeptide: Mitoferrin-1 (338 aa).

The tract at residues 1 to 42 (MELRSGSVGSQAVARRMDGDSRDGGGGKDATGSEDYENLPTS) is disordered. Over residues 15-26 (RRMDGDSRDGGG) the composition is skewed to basic and acidic residues. Solcar repeat units lie at residues 43–131 (ASVS…MKRT), 141–225 (NSHL…LQEQ), and 232–326 (YNPQ…FKYF). The next 6 membrane-spanning stretches (helical) occupy residues 45–64 (VSTH…SVMY), 106–125 (GVNV…FACY), 143–162 (HLAN…AVMN), 200–219 (SYTT…FITY), 234–253 (PQSH…AATT), and 301–320 (GIQA…WSVY).

Belongs to the mitochondrial carrier (TC 2.A.29) family. Interacts with ACB10; this interaction stabilizes SLC25A37 and enhances the function of SLC25A37 to import mitochondrial iron during erythroid differentiation.

It is found in the mitochondrion inner membrane. It catalyses the reaction Fe(2+)(in) = Fe(2+)(out). In terms of biological role, mitochondrial iron transporter that specifically mediates iron uptake in developing erythroid cells, thereby playing an essential role in heme biosynthesis. This Homo sapiens (Human) protein is Mitoferrin-1 (SLC25A37).